Reading from the N-terminus, the 1164-residue chain is DNA-directed RNA polymerase 133 kDa polypeptide (1164 aa).

It belongs to the RNA polymerase beta chain family. As to quaternary structure, the DNA-dependent RNA polymerase used for intermediate and late genes expression consists of eight subunits 147 kDa, 133 kDa, 35 kDa, 30 kDa, 22 kDa, 19 kDa, 18 kDa and 7 kDa totalling more than 500 kDa in mass. The same holoenzyme, with the addition of the transcription-specificity factor RAP94, is used for early gene expression.

It localises to the virion. It catalyses the reaction RNA(n) + a ribonucleoside 5'-triphosphate = RNA(n+1) + diphosphate. In terms of biological role, part of the DNA-dependent RNA polymerase which catalyzes the transcription of viral DNA into RNA using the four ribonucleoside triphosphates as substrates. Responsible for the transcription of early, intermediate and late genes. DNA-dependent RNA polymerase associates with the early transcription factor (ETF), itself composed of OPG118 and OPG133, thereby allowing the early genes transcription. Late transcription, and probably also intermediate transcription, require newly synthesized RNA polymerase. This chain is DNA-directed RNA polymerase 133 kDa polypeptide (OPG151), found in Homo sapiens (Human).